A 376-amino-acid chain; its full sequence is Putative type I restriction enzyme MpnIIP endonuclease subunit N-terminal part (376 aa).

Its function is as follows. The N-terminal section of a putative type I restriction enzyme that if reconstituted might recognize 5'-GAN(7)TAY-3' and cleave a random distance away. Subunit R is required for both nuclease and ATPase activities, but not for modification. The polypeptide is Putative type I restriction enzyme MpnIIP endonuclease subunit N-terminal part (Mycoplasma pneumoniae (strain ATCC 29342 / M129 / Subtype 1) (Mycoplasmoides pneumoniae)).